We begin with the raw amino-acid sequence, 145 residues long: 3-hydroxyacyl-[acyl-carrier-protein] dehydratase FabZ (145 aa).

Residue H48 is part of the active site.

Belongs to the thioester dehydratase family. FabZ subfamily.

It is found in the cytoplasm. The enzyme catalyses a (3R)-hydroxyacyl-[ACP] = a (2E)-enoyl-[ACP] + H2O. In terms of biological role, involved in unsaturated fatty acids biosynthesis. Catalyzes the dehydration of short chain beta-hydroxyacyl-ACPs and long chain saturated and unsaturated beta-hydroxyacyl-ACPs. In Cellvibrio japonicus (strain Ueda107) (Pseudomonas fluorescens subsp. cellulosa), this protein is 3-hydroxyacyl-[acyl-carrier-protein] dehydratase FabZ.